The chain runs to 296 residues: Phosphatidylserine decarboxylase proenzyme (296 aa).

Residues D113, H169, and S256 each act as charge relay system; for autoendoproteolytic cleavage activity in the active site. S256 functions as the Schiff-base intermediate with substrate; via pyruvic acid; for decarboxylase activity in the catalytic mechanism. Pyruvic acid (Ser); by autocatalysis is present on S256.

This sequence belongs to the phosphatidylserine decarboxylase family. PSD-B subfamily. Prokaryotic type II sub-subfamily. Heterodimer of a large membrane-associated beta subunit and a small pyruvoyl-containing alpha subunit. Requires pyruvate as cofactor. Is synthesized initially as an inactive proenzyme. Formation of the active enzyme involves a self-maturation process in which the active site pyruvoyl group is generated from an internal serine residue via an autocatalytic post-translational modification. Two non-identical subunits are generated from the proenzyme in this reaction, and the pyruvate is formed at the N-terminus of the alpha chain, which is derived from the carboxyl end of the proenzyme. The autoendoproteolytic cleavage occurs by a canonical serine protease mechanism, in which the side chain hydroxyl group of the serine supplies its oxygen atom to form the C-terminus of the beta chain, while the remainder of the serine residue undergoes an oxidative deamination to produce ammonia and the pyruvoyl prosthetic group on the alpha chain. During this reaction, the Ser that is part of the protease active site of the proenzyme becomes the pyruvoyl prosthetic group, which constitutes an essential element of the active site of the mature decarboxylase.

Its subcellular location is the cell membrane. The enzyme catalyses a 1,2-diacyl-sn-glycero-3-phospho-L-serine + H(+) = a 1,2-diacyl-sn-glycero-3-phosphoethanolamine + CO2. The protein operates within phospholipid metabolism; phosphatidylethanolamine biosynthesis; phosphatidylethanolamine from CDP-diacylglycerol: step 2/2. In terms of biological role, catalyzes the formation of phosphatidylethanolamine (PtdEtn) from phosphatidylserine (PtdSer). The protein is Phosphatidylserine decarboxylase proenzyme of Clostridium botulinum (strain Alaska E43 / Type E3).